The following is a 1197-amino-acid chain: Neural cell adhesion molecule L1.1 (1197 aa).

5 consecutive Ig-like C2-type domains span residues 1 to 58, 69 to 160, 165 to 263, 268 to 355, and 360 to 442; these read EFRQ…TAVS, PSLA…EPMS, PSNS…YTVT, PYWT…THVH, and PAQI…KSIS. Residues 1 to 1054 lie on the Extracellular side of the membrane; it reads EFRQRDPSPS…SPRNFATEGW (1054 aa). A disulfide bond links Cys92 and Cys143. N-linked (GlcNAc...) asparagine glycosylation is found at Asn135, Asn149, Asn221, Asn298, Asn414, Asn421, Asn438, and Asn449. 3 disulfide bridges follow: Cys199–Cys247, Cys289–Cys339, and Cys383–Cys432. One can recognise an Ig-like C2-type 6 domain in the interval 451-541; that stretch reads TKIVGPPQNL…DSDTASGYIT (91 aa). A disulfide bond links Cys472 and Cys525. Fibronectin type-III domains are found at residues 548-643, 645-742, 747-852, 853-952, and 953-1048; these read PPQS…TPAA, PDTN…SGED, APSA…TPEG, APGP…LLDG, and EPPS…SPRN. The segment covering 630-640 has biased composition (polar residues); that stretch reads APTESSLSYST. The interval 630-655 is disordered; sequence APTESSLSYSTPAAKPDTNPENVMTL. Asn708 carries an N-linked (GlcNAc...) asparagine glycan. N-linked (GlcNAc...) asparagine glycans are attached at residues Asn959, Asn968, Asn1002, and Asn1027. Residues 1055 to 1075 form a helical membrane-spanning segment; sequence FIGLISALVLLLLVLLLLCYI. At 1076–1197 the chain is on the cytoplasmic side; the sequence is KKSKGGKYSV…TSVTGILGPN (122 aa). 2 disordered regions span residues 1115–1135 and 1154–1197; these read MEKC…SNDS and IGQY…LGPN.

This sequence belongs to the immunoglobulin superfamily. L1/neurofascin/NgCAM family. In terms of tissue distribution, expressed in postmitotic neurons in 16-36 hours embryos, including those in the brain, cranial ganglia and otic and olfactory placodes, and in all classes of spinal neurons.

It localises to the cell membrane. Its subcellular location is the cell projection. It is found in the growth cone. Cell adhesion molecule with an important role in the development of the nervous system. Involved in neuron-neuron adhesion, neurite fasciculation, outgrowth of neurites, etc. Binds to axonin on neurons. The protein is Neural cell adhesion molecule L1.1 (nadl1.1) of Danio rerio (Zebrafish).